The chain runs to 71 residues: Protein DP71L (71 aa).

2 important for host CHOP inhibition regions span residues 16–18 (VRF) and 57–61 (LSAVL).

It belongs to the asfivirus DP71L family. In terms of assembly, interacts (via C-terminus) with host PPP1CB.

Interacts with the host phosphatase PP1 catalytic subunit (PPP1CB) and recruits it to dephosphorylate EIF2S1/eIF2alpha and therefore restores the host translation that has been shut-down by the host. Also inhibits the EIF2S1/eIF2alpha-ATF4-DDIT3/CHOP pathway. The protein is Protein DP71L of Ornithodoros (relapsing fever ticks).